Reading from the N-terminus, the 97-residue chain is uncharacterized protein (97 aa).

This is an uncharacterized protein from Enterobacteria phage T4 (Bacteriophage T4).